We begin with the raw amino-acid sequence, 395 residues long: Renin (395 aa).

The signal sequence occupies residues 1-21; sequence MLRSWEFVLLISCFLCFSSDA. Residues 22-43 constitute a propeptide, activation peptide; sequence LQRISLKKMPSIRETLQEMGMK. The N-linked (GlcNAc...) asparagine glycan is linked to Asn64. Residues 79–392 form the Peptidase A1 domain; that stretch reads YYGEISIGTP…DRQNNRIGFA (314 aa). Asp97 is a catalytic residue. 2 disulfide bridges follow: Cys110/Cys117 and Cys274/Cys278. Residue Asp283 is part of the active site. Cys316 and Cys351 are joined by a disulfide.

Belongs to the peptidase A1 family. Post-translationally, N-glycosylated. In terms of tissue distribution, expressed by the venom gland (at protein level).

It localises to the secreted. The catalysed reaction is Cleavage of Leu-|-Xaa bond in angiotensinogen to generate angiotensin I.. With respect to regulation, inhibited completely by aspartyl protease inhibitor pepstatin A, but not by the serine- or metalloproteinase inhibitors PMSF or EDTA. In terms of biological role, renin is a highly specific endopeptidase, whose only known function is to generate angiotensin I from angiotensinogen in the plasma, initiating a cascade of reactions that produce an elevation of blood pressure and increased sodium retention by the kidney. This protein is also found in snake venom and shown to specifically cleave human and porcine angiotensinogen into angiotensin I. It does not have general protease activity, no cleavage of alpha or beta casein. May be directly responsible for elevation of blood pressure in the victims of envenomation. The sequence is that of Renin from Echis ocellatus (Ocellated saw-scaled viper).